The following is a 130-amino-acid chain: Small ribosomal subunit protein uS9 (130 aa).

The protein belongs to the universal ribosomal protein uS9 family.

The polypeptide is Small ribosomal subunit protein uS9 (Vibrio campbellii (strain ATCC BAA-1116)).